The following is a 505-amino-acid chain: Lysine--tRNA ligase (505 aa).

2 residues coordinate Mg(2+): Glu-415 and Glu-422.

This sequence belongs to the class-II aminoacyl-tRNA synthetase family. As to quaternary structure, homodimer. Mg(2+) is required as a cofactor.

It localises to the cytoplasm. The catalysed reaction is tRNA(Lys) + L-lysine + ATP = L-lysyl-tRNA(Lys) + AMP + diphosphate. The sequence is that of Lysine--tRNA ligase from Serratia proteamaculans (strain 568).